We begin with the raw amino-acid sequence, 62 residues long: Large ribosomal subunit protein uL30 (62 aa).

The protein belongs to the universal ribosomal protein uL30 family. Part of the 50S ribosomal subunit.

The chain is Large ribosomal subunit protein uL30 from Prosthecochloris aestuarii (strain DSM 271 / SK 413).